The following is a 124-amino-acid chain: Large ribosomal subunit protein bL12 (124 aa).

The protein belongs to the bacterial ribosomal protein bL12 family. As to quaternary structure, homodimer. Part of the ribosomal stalk of the 50S ribosomal subunit. Forms a multimeric L10(L12)X complex, where L10 forms an elongated spine to which 2 to 4 L12 dimers bind in a sequential fashion. Binds GTP-bound translation factors.

Forms part of the ribosomal stalk which helps the ribosome interact with GTP-bound translation factors. Is thus essential for accurate translation. The sequence is that of Large ribosomal subunit protein bL12 from Ralstonia pickettii (strain 12J).